The primary structure comprises 401 residues: MWSSSSSLCRNPSFRRAWLSTVTVTQTAAPTSSRLAALRTQLATEEASIDDFSSTNAPTTTTHYTSSNGSPIVRQKAAPRSAKILPKPRWLKAAPATSDNYRKLRDTVRELGLATVCEEARCPNIGECWGGGEDQTATATIMIMGDTCTRGCRFCSVKTSRAPPPLDPHEPEKVATAIAQWGLDYVVLTSVDRDDLPDQGADHFRQVVTQLKLKKPSLLVEALTPDFQGNMDLVHAVATSGLDVYAHNMETVEALTPKVRDRRATYRQSLEVLRYVKTIQSDPIGTTNNHNNNNGCLTKTSLMLGLGETDDQVLTTLRDLRDADVDVVTFGQYLQPTKKHLPVQEYVTPEKFDFWQETAMGMGFAYVASGPLVRSSYKAGELFLQKYIAQKKQRNAEVAAA.

A mitochondrion-targeting transit peptide spans methionine 1 to threonine 25. The disordered stretch occupies residues isoleucine 49–proline 79. The segment covering aspartate 51–serine 70 has biased composition (polar residues). [4Fe-4S] cluster contacts are provided by cysteine 117, cysteine 122, cysteine 128, cysteine 148, cysteine 152, cysteine 155, and serine 376. The region spanning glutamate 133–alanine 365 is the Radical SAM core domain.

The protein belongs to the radical SAM superfamily. Lipoyl synthase family. Requires [4Fe-4S] cluster as cofactor.

Its subcellular location is the mitochondrion. It catalyses the reaction [[Fe-S] cluster scaffold protein carrying a second [4Fe-4S](2+) cluster] + N(6)-octanoyl-L-lysyl-[protein] + 2 oxidized [2Fe-2S]-[ferredoxin] + 2 S-adenosyl-L-methionine + 4 H(+) = [[Fe-S] cluster scaffold protein] + N(6)-[(R)-dihydrolipoyl]-L-lysyl-[protein] + 4 Fe(3+) + 2 hydrogen sulfide + 2 5'-deoxyadenosine + 2 L-methionine + 2 reduced [2Fe-2S]-[ferredoxin]. It functions in the pathway protein modification; protein lipoylation via endogenous pathway; protein N(6)-(lipoyl)lysine from octanoyl-[acyl-carrier-protein]: step 2/2. Catalyzes the radical-mediated insertion of two sulfur atoms into the C-6 and C-8 positions of the octanoyl moiety bound to the lipoyl domains of lipoate-dependent enzymes, thereby converting the octanoylated domains into lipoylated derivatives. The chain is Lipoyl synthase 1, mitochondrial from Phaeodactylum tricornutum (strain CCAP 1055/1).